The sequence spans 287 residues: Inositol-1-monophosphatase (287 aa).

Mg(2+)-binding residues include glutamate 79, aspartate 96, leucine 98, and aspartate 99. Glutamate 79 is a binding site for substrate. Substrate-binding positions include 98–101 (LDGT), arginine 195, and aspartate 224. Aspartate 224 is a binding site for Mg(2+).

This sequence belongs to the inositol monophosphatase superfamily. Mg(2+) is required as a cofactor.

It carries out the reaction a myo-inositol phosphate + H2O = myo-inositol + phosphate. This chain is Inositol-1-monophosphatase (suhB), found in Synechocystis sp. (strain ATCC 27184 / PCC 6803 / Kazusa).